The sequence spans 726 residues: MSTATTVAPAGIPATPGPVNPPPPEVSNPSKPGRKTNQLQYMQNVVVKTLWKHQFAWPFYQPVDAIKLNLPDYHKIIKNPMDMGTIKKRLENNYYWSASECMQDFNTMFTNCYIYNKPTDDIVLMAQALEKIFLQKVAQMPQEEVELLPPAPKGKGRKPAAGAQSAGTQQVAAVSSVSPATPFQSVPPTVSQTPVIAATPVPTITANVTSVPVPPAAAPPPPATPIVPVVPPTPPVVKKKGVKRKADTTTPTTSAITASRSESPPPLSDPKQAKVVARRESGGRPIKPPKKDLEDGEVPQHAGKKGKLSEHLRYCDSILREMLSKKHAAYAWPFYKPVDAEALELHDYHDIIKHPMDLSTVKRKMDGREYPDAQGFAADVRLMFSNCYKYNPPDHEVVAMARKLQDVFEMRFAKMPDEPVEAPALPAPAAPMVSKGAESSRSSEESSSDSGSSDSEEERATRLAELQEQLKAVHEQLAALSQAPVNKPKKKKEKKEKEKKKKDKEKEKEKHKVKAEEEKKAKVAPPAKQAQQKKAPAKKANSTTTAGRQLKKGGKQASASYDSEEEEEGLPMSYDEKRQLSLDINRLPGEKLGRVVHIIQSREPSLRDSNPDEIEIDFETLKPTTLRELERYVKSCLQKKQRKPFSASGKKQAAKSKEELAQEKKKELEKRLQDVSGQLSSSKKPARKEKPGSAPSGGPSRLSSSSSSESGSSSSSGSSSDSSDSE.

Residues 1 to 35 form a disordered region; it reads MSTATTVAPAGIPATPGPVNPPPPEVSNPSKPGRK. Residue Ser-2 is modified to N-acetylserine. Residues 15-26 are compositionally biased toward pro residues; sequence TPGPVNPPPPEV. In terms of domain architecture, Bromo 1 spans 34 to 140; sequence RKTNQLQYMQ…KIFLQKVAQM (107 aa). The interval 78 to 80 is acetylated histone H3 binding; sequence KNP. Disordered regions lie at residues 149 to 169 and 237 to 305; these read PPAP…AGTQ and VKKK…AGKK. Low complexity predominate over residues 248 to 261; the sequence is TTTPTTSAITASRS. 2 positions are modified to phosphoserine: Ser-263 and Ser-281. The region spanning 306-415 is the Bromo 2 domain; sequence GKLSEHLRYC…DVFEMRFAKM (110 aa). Lys-414 is covalently cross-linked (Glycyl lysine isopeptide (Lys-Gly) (interchain with G-Cter in SUMO2)). Disordered stretches follow at residues 421 to 462, 477 to 575, and 637 to 726; these read EAPA…RATR, LAAL…MSYD, and LQKK…SDSE. Residues 453 to 524 adopt a coiled-coil conformation; sequence SDSEEERATR…AEEEKKAKVA (72 aa). The span at 487 to 503 shows a compositional bias: basic residues; sequence KPKKKKEKKEKEKKKKD. Positions 504-521 are enriched in basic and acidic residues; it reads KEKEKEKHKVKAEEEKKA. The segment covering 523–540 has biased composition (low complexity); the sequence is VAPPAKQAQQKKAPAKKA. Positions 562 to 644 constitute an NET domain; the sequence is DSEEEEEGLP…SCLQKKQRKP (83 aa). Position 563 is a phosphoserine (Ser-563). Residues 645 to 684 adopt a coiled-coil conformation; the sequence is FSASGKKQAAKSKEELAQEKKKELEKRLQDVSGQLSSSKK. Basic and acidic residues predominate over residues 655 to 673; it reads KSKEELAQEKKKELEKRLQ. The segment covering 692–726 has biased composition (low complexity); it reads GSAPSGGPSRLSSSSSSESGSSSSSGSSSDSSDSE.

It belongs to the BET family. As to quaternary structure, interacts (via bromo domain 1) with GATA1 acetylated at 'Lys-312' and 'Lys-315'. Interacts (via bromo domain 1) with GATA2 acetylated on lysine residues. Interacts (via NET domain) with CHD4 (via KIKL motif). Interacts (via NET domain) with SMARCA4 (via KIKL motif). Interacts (via NET domain) with NSD3 (via KIKL motif). (Microbial infection) Interacts with the Integrase protein of Moloney murine leukemia virus (MLV). Ubiquitous.

It is found in the nucleus. The protein resides in the chromosome. Its activity is regulated as follows. Inhibited by JQ1, a thieno-triazolo-1,4-diazepine derivative, which specifically inhibits members of the BET family (BRD2, BRD3 and BRD4). The first bromo domain is inhibited by GSK778 (iBET-BD1), which specifically inhibits the first bromo domain of members of the BET family (BRD2, BRD3 and BRD4). The second bromo domain is inhibited by ABBV-744, which specifically inhibits the second bromo domain of members of the BET family (BRD2, BRD3 and BRD4). The second bromo domain is inhibited by GSK046 (iBET-BD2), which specifically inhibits the second bromo domain of members of the BET family (BRD2, BRD3 and BRD4). Functionally, chromatin reader that recognizes and binds acetylated histones, thereby controlling gene expression and remodeling chromatin structures. Recruits transcription factors and coactivators to target gene sites, and activates RNA polymerase II machinery for transcriptional elongation. In vitro, binds acetylated lysine residues on the N-terminus of histone H2A, H2B, H3 and H4. Involved in endoderm differentiation via its association with long non-coding RNA (lncRNA) DIGIT: BRD3 undergoes liquid-liquid phase separation upon binding to lncRNA DIGIT, promoting binding to histone H3 acetylated at 'Lys-18' (H3K18ac) to induce endoderm gene expression. Also binds non-histones acetylated proteins, such as GATA1 and GATA2: regulates transcription by promoting the binding of the transcription factor GATA1 to its targets. The polypeptide is Bromodomain-containing protein 3 (Homo sapiens (Human)).